Reading from the N-terminus, the 347-residue chain is MLIKQGDRLINTRNWSELVKPEQISRDGEVSDTMYGKFVCEPLERGYATTIGNAMRRVLLSSLQGAAFVAVKISGVQHEFTTIPGVLEDVTDVVLNLKQVRLAMDTEEPQYLELKVDKRGAITAGDVRTNQHVMVLNPDQHIATLTEDIELTFELEVRMGKGYVPADMHEGLSEEIGLIKLDASFSPVRKVAYTVEQARVGQMTNYDKLILEVWTDGSVSPEDAIAYSAKIIKDQISVFINFDERISGENSNGSADSGEFNEHLFKSIDELELSVRATNCLKSANIALVGELVQKSENEMLKTKNFGRKSLDEIRRVLGDMGLDFGTKVDGFEKKYQEWKRKQQHEA.

The interval 1 to 243 is alpha N-terminal domain (alpha-NTD); the sequence is MLIKQGDRLI…DQISVFINFD (243 aa). Residues 260 to 347 form an alpha C-terminal domain (alpha-CTD) region; sequence FNEHLFKSID…EWKRKQQHEA (88 aa).

It belongs to the RNA polymerase alpha chain family. Homodimer. The RNAP catalytic core consists of 2 alpha, 1 beta, 1 beta' and 1 omega subunit. When a sigma factor is associated with the core the holoenzyme is formed, which can initiate transcription.

The enzyme catalyses RNA(n) + a ribonucleoside 5'-triphosphate = RNA(n+1) + diphosphate. In terms of biological role, DNA-dependent RNA polymerase catalyzes the transcription of DNA into RNA using the four ribonucleoside triphosphates as substrates. The sequence is that of DNA-directed RNA polymerase subunit alpha from Nitratidesulfovibrio vulgaris (strain ATCC 29579 / DSM 644 / CCUG 34227 / NCIMB 8303 / VKM B-1760 / Hildenborough) (Desulfovibrio vulgaris).